A 273-amino-acid chain; its full sequence is Imidazole glycerol phosphate synthase subunit HisF (273 aa).

Active-site residues include aspartate 11 and aspartate 134.

The protein belongs to the HisA/HisF family. In terms of assembly, heterodimer of HisH and HisF.

Its subcellular location is the cytoplasm. It catalyses the reaction 5-[(5-phospho-1-deoxy-D-ribulos-1-ylimino)methylamino]-1-(5-phospho-beta-D-ribosyl)imidazole-4-carboxamide + L-glutamine = D-erythro-1-(imidazol-4-yl)glycerol 3-phosphate + 5-amino-1-(5-phospho-beta-D-ribosyl)imidazole-4-carboxamide + L-glutamate + H(+). Its pathway is amino-acid biosynthesis; L-histidine biosynthesis; L-histidine from 5-phospho-alpha-D-ribose 1-diphosphate: step 5/9. Its function is as follows. IGPS catalyzes the conversion of PRFAR and glutamine to IGP, AICAR and glutamate. The HisF subunit catalyzes the cyclization activity that produces IGP and AICAR from PRFAR using the ammonia provided by the HisH subunit. The sequence is that of Imidazole glycerol phosphate synthase subunit HisF from Methanosarcina acetivorans (strain ATCC 35395 / DSM 2834 / JCM 12185 / C2A).